The following is a 222-amino-acid chain: Glutathione S-transferase alpha M14 (222 aa).

An N-acetylmethionine modification is found at Met1. Ala2 carries the N-acetylalanine; in Glutathione S-transferase alpha M14, N-terminally processed modification. The GST N-terminal domain maps to Gly3–Gly83. Lys4 carries the N6-succinyllysine modification. Glutathione is bound by residues Tyr9, Gln54–Val55, and Gln67–Thr68. The GST C-terminal domain occupies Asp85 to Met208. Residues Gln199–Asp222 are disordered. Basic and acidic residues predominate over residues Pro206–Asp222.

This sequence belongs to the GST superfamily. Alpha family. As to quaternary structure, homodimer or heterodimer of GSTA1 and GSTA2.

It is found in the cytoplasm. It carries out the reaction RX + glutathione = an S-substituted glutathione + a halide anion + H(+). It catalyses the reaction prostaglandin A2 + glutathione = prostaglandin A2-S-(R)-glutathione. The enzyme catalyses prostaglandin J2 + glutathione = prostaglandin J2-S-(R)-glutathione. The catalysed reaction is (13S)-hydroperoxy-(9Z,11E)-octadecadienoate + 2 glutathione = (13S)-hydroxy-(9Z,11E)-octadecadienoate + glutathione disulfide + H2O. It carries out the reaction androst-5-ene-3,17-dione = androst-4-ene-3,17-dione. Glutathione S-transferase that catalyzes the nucleophilic attack of the sulfur atom of glutathione on the electrophilic groups of a wide range of exogenous and endogenous compounds. Involved in the formation of glutathione conjugates of both prostaglandin A2 (PGA2) and prostaglandin J2 (PGJ2). It also catalyzes the isomerization of D5-androstene-3,17-dione (AD) into D4-androstene-3,17-dione and may therefore play an important role in hormone biosynthesis. Through its glutathione-dependent peroxidase activity toward the fatty acid hydroperoxide (13S)-hydroperoxy-(9Z,11E)-octadecadienoate/13-HPODE it is also involved in the metabolism of oxidized linoleic acid. In Sus scrofa (Pig), this protein is Glutathione S-transferase alpha M14.